Here is a 595-residue protein sequence, read N- to C-terminus: Arginine--tRNA ligase (595 aa).

The 'HIGH' region signature appears at 132–142; sequence ANPTGPLHVGH.

It belongs to the class-I aminoacyl-tRNA synthetase family. In terms of assembly, monomer.

The protein localises to the cytoplasm. The enzyme catalyses tRNA(Arg) + L-arginine + ATP = L-arginyl-tRNA(Arg) + AMP + diphosphate. The protein is Arginine--tRNA ligase of Cupriavidus taiwanensis (strain DSM 17343 / BCRC 17206 / CCUG 44338 / CIP 107171 / LMG 19424 / R1) (Ralstonia taiwanensis (strain LMG 19424)).